The sequence spans 1020 residues: Protein CLASP-2 (1020 aa).

The span at 259-271 shows a compositional bias: low complexity; the sequence is ASDAASSSTSINS. 3 disordered regions span residues 259–280, 329–387, and 419–461; these read ASDA…PFRS, PMTT…RPSA, and LQKA…ALDT. A compositionally biased stretch (polar residues) spans 329-343; sequence PMTTRTLSKIDTSPG. Low complexity predominate over residues 372-381; that stretch reads SQPGSRNGSP. Residues 450–460 are compositionally biased toward polar residues; the sequence is QKATPQKSALD. An HEAT repeat occupies 954–992; the sequence is LAPCVIKSYDSPSSAVRKTAVYCLVAMVNKLGMKTMEPH.

The protein belongs to the CLASP family. As to quaternary structure, interacts with hcp-1 and hcp-2.

It localises to the cytoplasm. The protein localises to the cytoskeleton. Its subcellular location is the microtubule organizing center. It is found in the centrosome. The protein resides in the chromosome. It localises to the centromere. The protein localises to the kinetochore. Its subcellular location is the spindle. Its function is as follows. Probable microtubule plus-end tracking protein that promotes the stabilization of dynamic microtubules. Required for the formation of mitotic and meiotic spindles. Specifically promotes the polymerization of kinetochore-bound microtubules. Also required for cytoplasmic streaming. Essential for embryonic development. The sequence is that of Protein CLASP-2 (cls-2) from Caenorhabditis elegans.